A 69-amino-acid chain; its full sequence is DNA-directed RNA polymerase subunit epsilon (69 aa).

Belongs to the RNA polymerase subunit epsilon family. RNAP is composed of a core of 2 alpha, a beta and a beta' subunit. The core is associated with a delta subunit, and at least one of epsilon or omega. When a sigma factor is associated with the core the holoenzyme is formed, which can initiate transcription.

It carries out the reaction RNA(n) + a ribonucleoside 5'-triphosphate = RNA(n+1) + diphosphate. In terms of biological role, a non-essential component of RNA polymerase (RNAP). The protein is DNA-directed RNA polymerase subunit epsilon of Listeria monocytogenes serotype 4b (strain CLIP80459).